We begin with the raw amino-acid sequence, 504 residues long: Maturase K (504 aa).

This sequence belongs to the intron maturase 2 family. MatK subfamily.

The protein resides in the plastid. The protein localises to the chloroplast. In terms of biological role, usually encoded in the trnK tRNA gene intron. Probably assists in splicing its own and other chloroplast group II introns. In Fagus crenata (Japanese beech), this protein is Maturase K.